The sequence spans 560 residues: MMTSWSDRLQNAADVPANMDKHALKKYRREAYHRVFVNRSLAMEKIKCFGFDMDYTLAVYKSPEYESLGFELTVERLVSIGYPQELLNFAYDSTFPTRGLVFDTLYGNLLKVDAYGNLLVCAHGFNFIRGPETREQYPNKFIQRDDTERFYILNTLFNLPETYLLACLVDFFTNCPRYTSCDTGFKDGDLFMSYRSMFQDVRDAVDWVHYKGSLKEKTVENLEKYVVKDGKLPLLLSRMKEVGKVFLATNSDYKYTDKIMTYLFDFPHGPKPGSSHRPWQSYFDLILVDARKPLFFGEGTVLRQVDTKTGKLKIGTYTGPLQHGIVYSGGSSDTICDLLGAKGKDILYIGDHIFGDILKSKKRQGWRTFLVIPELAQELHVWTDKSSLFEELQSLDIFLAELYKHLDSSSNERPDISSIQRRIKKVTHDMDMCYGMMGSLFRSGSRQTLFASQVMRYADLYAASFINLLYYPFSYLFRAAHVLMPHESTVEHTHVDINEMESPLATRNRTSVDFKDTDYKRHQLTRSISEIKPPNLFPLAPQEITHCHDEDDDEEEEEEE.

Aspartate 52 acts as the Nucleophile in catalysis. IMP contacts are provided by aspartate 52 and aspartate 54. Mg(2+)-binding residues include aspartate 52 and aspartate 54. The active-site Proton donor is the aspartate 54. Residues arginine 144 and asparagine 154 each coordinate ATP. Residues arginine 202, aspartate 206, lysine 215, threonine 249, asparagine 250, serine 251, and lysine 292 each contribute to the IMP site. Residue aspartate 351 coordinates Mg(2+). Serine 418 is modified (phosphoserine). ATP-binding residues include glutamine 453 and arginine 456. Phosphoserine occurs at positions 502, 511, and 527. A disordered region spans residues 541-560 (PQEITHCHDEDDDEEEEEEE). The tract at residues 548–560 (HDEDDDEEEEEEE) is required for tetramer assembly. The span at 550–560 (EDDDEEEEEEE) shows a compositional bias: acidic residues.

It belongs to the 5'(3')-deoxyribonucleotidase family. As to quaternary structure, homotetramer. Mg(2+) is required as a cofactor.

It localises to the cytoplasm. It is found in the cytosol. The enzyme catalyses a ribonucleoside 5'-phosphate + H2O = a ribonucleoside + phosphate. The catalysed reaction is a 2'-deoxyribonucleoside + a ribonucleoside 5'-phosphate = a ribonucleoside + a 2'-deoxyribonucleoside 5'-phosphate. It carries out the reaction IMP + H2O = inosine + phosphate. It catalyses the reaction GMP + H2O = guanosine + phosphate. The enzyme catalyses dIMP + H2O = 2'-deoxyinosine + phosphate. The catalysed reaction is dGMP + H2O = 2'-deoxyguanosine + phosphate. It carries out the reaction XMP + H2O = xanthosine + phosphate. It catalyses the reaction inosine + GMP = guanosine + IMP. The enzyme catalyses dGMP + inosine = 2'-deoxyguanosine + IMP. The catalysed reaction is dIMP + inosine = 2'-deoxyinosine + IMP. It carries out the reaction inosine + UMP = uridine + IMP. It catalyses the reaction inosine + CMP = cytidine + IMP. The enzyme catalyses inosine + AMP = IMP + adenosine. Allosterically activated by various compounds including ATP, 2,3-BPG/2,3-Bisphosphoglyceric acid and Ap4A/P1,P4-bis(5'-adenosyl) tetraphosphate. Binding of an allosteric activator is a prerequisiste to magnesium and substrate binding. Inhibited by inorganic phosphate. Functionally, broad specificity cytosolic 5'-nucleotidase that catalyzes the dephosphorylation of 6-hydroxypurine nucleoside 5'-monophosphates. In addition, possesses a phosphotransferase activity by which it can transfer a phosphate from a donor nucleoside monophosphate to an acceptor nucleoside, preferably inosine, deoxyinosine and guanosine. Has the highest activities for IMP and GMP followed by dIMP, dGMP and XMP. Could also catalyze the transfer of phosphates from pyrimidine monophosphates but with lower efficiency. Through these activities regulates the purine nucleoside/nucleotide pools within the cell. In Rattus norvegicus (Rat), this protein is Cytosolic purine 5'-nucleotidase.